A 638-amino-acid polypeptide reads, in one-letter code: Sodium- and chloride-dependent neutral and basic amino acid transporter B(0+) (638 aa).

The Cytoplasmic segment spans residues 1-44 (MDRLKCPNFFKCRQKEKVTASSENFHVGENDENQERGNWSKKSD). The next 3 helical transmembrane spans lie at 45–65 (YLLS…FPYL), 72–92 (GAFL…LFFL), and 110–130 (ILPL…FVAI). The Extracellular portion of the chain corresponds to 131–230 (YYNVIIAYSL…RSSGMDETGV (100 aa)). Asparagine 155, asparagine 163, asparagine 174, asparagine 185, asparagine 193, and asparagine 198 each carry an N-linked (GlcNAc...) asparagine glycan. The next 2 helical transmembrane spans lie at 231–251 (VVWY…AALF) and 257–277 (SGKV…ILLI). Asparagine 298 is a glycosylation site (N-linked (GlcNAc...) asparagine). The next 7 membrane-spanning stretches (helical) occupy residues 311–331 (AATQ…ALSS), 344–364 (IIVC…IFSI), 395–415 (LAQL…LLTL), 453–473 (ILFL…VHLI), 476–496 (FCAG…IIWI), 524–544 (CWFV…LVKF), and 559–579 (VALG…MAII). Residues 580 to 638 (KIVQAEGNILQRIISCCRPASNWGPYLEKHRGERYRDMAEPAKETDHEIPTISGSTKPE) are Cytoplasmic-facing. The segment covering 618 to 628 (AEPAKETDHEI) has biased composition (basic and acidic residues). The interval 618–638 (AEPAKETDHEIPTISGSTKPE) is disordered.

Belongs to the sodium:neurotransmitter symporter (SNF) (TC 2.A.22) family. SLC6A14 subfamily. Expressed in the distal region of the intestinal tract: cecum and colon.

It localises to the membrane. Its subcellular location is the apical cell membrane. It catalyses the reaction glycine(out) + chloride(out) + 2 Na(+)(out) = glycine(in) + chloride(in) + 2 Na(+)(in). The enzyme catalyses L-leucine(out) + chloride(out) + 2 Na(+)(out) = L-leucine(in) + chloride(in) + 2 Na(+)(in). The catalysed reaction is L-glutamine(out) + chloride(out) + 2 Na(+)(out) = L-glutamine(in) + chloride(in) + 2 Na(+)(in). It carries out the reaction L-arginine(out) + chloride(out) + 2 Na(+)(out) = L-arginine(in) + chloride(in) + 2 Na(+)(in). It catalyses the reaction (R)-carnitine(out) + chloride(out) + 2 Na(+)(out) = (R)-carnitine(in) + chloride(in) + 2 Na(+)(in). The enzyme catalyses O-propanoyl-(R)-carnitine(out) + chloride(out) + 2 Na(+)(out) = O-propanoyl-(R)-carnitine(in) + chloride(in) + 2 Na(+)(in). The catalysed reaction is L-isoleucine(out) + chloride(out) + 2 Na(+)(out) = L-isoleucine(in) + chloride(in) + 2 Na(+)(in). It carries out the reaction L-methionine(out) + chloride(out) + 2 Na(+)(out) = L-methionine(in) + chloride(in) + 2 Na(+)(in). It catalyses the reaction L-valine(out) + chloride(out) + 2 Na(+)(out) = L-valine(in) + chloride(in) + 2 Na(+)(in). The enzyme catalyses L-alanine(out) + chloride(out) + 2 Na(+)(out) = L-alanine(in) + chloride(in) + 2 Na(+)(in). The catalysed reaction is L-serine(out) + chloride(out) + 2 Na(+)(out) = L-serine(in) + chloride(in) + 2 Na(+)(in). It carries out the reaction L-cysteine(out) + chloride(out) + 2 Na(+)(out) = L-cysteine(in) + chloride(in) + 2 Na(+)(in). It catalyses the reaction L-asparagine(out) + chloride(out) + 2 Na(+)(out) = L-asparagine(in) + chloride(in) + 2 Na(+)(in). The enzyme catalyses L-threonine(out) + chloride(out) + 2 Na(+)(out) = L-threonine(in) + chloride(in) + 2 Na(+)(in). The catalysed reaction is L-phenylalanine(out) + chloride(out) + 2 Na(+)(out) = L-phenylalanine(in) + chloride(in) + 2 Na(+)(in). It carries out the reaction L-tryptophan(out) + chloride(out) + 2 Na(+)(out) = L-tryptophan(in) + chloride(in) + 2 Na(+)(in). It catalyses the reaction L-tyrosine(out) + chloride(out) + 2 Na(+)(out) = L-tyrosine(in) + chloride(in) + 2 Na(+)(in). The enzyme catalyses L-histidine(out) + chloride(out) + 2 Na(+)(out) = L-histidine(in) + chloride(in) + 2 Na(+)(in). The catalysed reaction is L-lysine(out) + chloride(out) + 2 Na(+)(out) = L-lysine(in) + chloride(in) + 2 Na(+)(in). It carries out the reaction O-butanoyl-(R)-carnitine(out) + chloride(out) + 2 Na(+)(out) = O-butanoyl-(R)-carnitine(in) + chloride(in) + 2 Na(+)(in). In terms of biological role, amino acid transporter that plays an important role in the absorption of amino acids in the intestinal tract. Mediates the uptake of a broad range of neutral and cationic amino acids (with the exception of proline) in a Na(+)/Cl(-)-dependent manner. Transports non-alpha-amino acids such as beta-alanine with low affinity, and has a higher affinity for dipolar and cationic amino acids such as leucine and lysine. Can also transport carnitine, butyrylcarnitine and propionylcarnitine coupled to the transmembrane gradients of Na(+) and Cl(-). This chain is Sodium- and chloride-dependent neutral and basic amino acid transporter B(0+), found in Mus musculus (Mouse).